Reading from the N-terminus, the 297-residue chain is Bifunctional protein FolD (297 aa).

NADP(+)-binding positions include 168–170 (GRG), T195, and V236.

It belongs to the tetrahydrofolate dehydrogenase/cyclohydrolase family. In terms of assembly, homodimer.

It catalyses the reaction (6R)-5,10-methylene-5,6,7,8-tetrahydrofolate + NADP(+) = (6R)-5,10-methenyltetrahydrofolate + NADPH. The catalysed reaction is (6R)-5,10-methenyltetrahydrofolate + H2O = (6R)-10-formyltetrahydrofolate + H(+). Its pathway is one-carbon metabolism; tetrahydrofolate interconversion. Functionally, catalyzes the oxidation of 5,10-methylenetetrahydrofolate to 5,10-methenyltetrahydrofolate and then the hydrolysis of 5,10-methenyltetrahydrofolate to 10-formyltetrahydrofolate. This is Bifunctional protein FolD from Bifidobacterium animalis subsp. lactis (strain AD011).